Reading from the N-terminus, the 336-residue chain is SCP domain-containing protein 1 (336 aa).

The first 18 residues, 1–18, serve as a signal peptide directing secretion; sequence MEFKLLLVLCFNIGLICS. Asn-47 carries an N-linked (GlcNAc...) asparagine glycan. Residues 73 to 85 show a composition bias toward polar residues; that stretch reads QGGNTAPSSSLPG. Residues 73-94 are disordered; it reads QGGNTAPSSSLPGVSSMPMPSA. The 118-residue stretch at 175 to 292 folds into the SCP domain; it reads LEEHNKFRSD…YCGDMSFIAC (118 aa). Residues Asn-213 and Asn-257 are each glycosylated (N-linked (GlcNAc...) asparagine).

As to expression, component of the acid-insoluble and acid-soluble organic matrix of calcified layers of the shell (at protein level).

It is found in the secreted. The sequence is that of SCP domain-containing protein 1 from Lottia gigantea (Giant owl limpet).